Reading from the N-terminus, the 134-residue chain is UPF0412 protein YaaI (134 aa).

The first 23 residues, Met1–Ala23, serve as a signal peptide directing secretion.

The protein belongs to the UPF0412 family.

The protein is UPF0412 protein YaaI of Escherichia coli O157:H7.